A 162-amino-acid chain; its full sequence is Nascent polypeptide-associated complex subunit beta (162 aa).

Disordered stretches follow at residues 1-39 and 130-162; these read MPVDPAKLAALQKKSGAQSGGKGTPRRPGKKVAGRNISE and EQAKKTAGGPDAAKEAGDDEIPNLVENFEDNVE. Residues 24 to 33 show a composition bias toward basic residues; that stretch reads TPRRPGKKVA. Residues 38-103 enclose the NAC-A/B domain; sequence SEDEKKLSAT…SQQKDIAELI (66 aa). Residues 146 to 162 show a composition bias toward acidic residues; that stretch reads GDDEIPNLVENFEDNVE.

Belongs to the NAC-beta family. As to quaternary structure, part of the nascent polypeptide-associated complex (NAC), consisting of EGD2 and EGD1. NAC associates with ribosomes via EGD1.

Its subcellular location is the cytoplasm. The protein localises to the nucleus. In terms of biological role, component of the nascent polypeptide-associated complex (NAC), a dynamic component of the ribosomal exit tunnel, protecting the emerging polypeptides from interaction with other cytoplasmic proteins to ensure appropriate nascent protein targeting. The NAC complex also promotes mitochondrial protein import by enhancing productive ribosome interactions with the outer mitochondrial membrane and blocks the inappropriate interaction of ribosomes translating non-secretory nascent polypeptides with translocation sites in the membrane of the endoplasmic reticulum. EGD1 may act as a transcription factor that exert a negative effect on the expression of several genes that are transcribed by RNA polymerase II. The sequence is that of Nascent polypeptide-associated complex subunit beta (EGD1) from Yarrowia lipolytica (strain CLIB 122 / E 150) (Yeast).